Consider the following 600-residue polypeptide: Malto-oligosyltrehalose trehalohydrolase (600 aa).

The disordered stretch occupies residues 1 to 34 (MTQTQPVTPTPPASFQTQHDPRTRLGATPLPGGA). Position 273 to 278 (273 to 278 (RLDATP)) interacts with substrate. The Nucleophile role is filled by aspartate 275. Residue glutamate 308 is the Proton donor of the active site. Residues 328 to 332 (DDFHH), glutamate 376, and 399 to 404 (HDQIGN) each bind substrate.

This sequence belongs to the glycosyl hydrolase 13 family. Monomer.

It is found in the cytoplasm. The catalysed reaction is hydrolysis of (1-&gt;4)-alpha-D-glucosidic linkage in 4-alpha-D-[(1-&gt;4)-alpha-D-glucanosyl]n trehalose to yield trehalose and (1-&gt;4)-alpha-D-glucan.. It participates in glycan biosynthesis; trehalose biosynthesis. In Deinococcus radiodurans (strain ATCC 13939 / DSM 20539 / JCM 16871 / CCUG 27074 / LMG 4051 / NBRC 15346 / NCIMB 9279 / VKM B-1422 / R1), this protein is Malto-oligosyltrehalose trehalohydrolase (treZ).